We begin with the raw amino-acid sequence, 520 residues long: Target of rapamycin complex 2 subunit MAPKAP1 (520 aa).

A CRIM domain is found at 139 to 267 (QSILSVRLEQ…GFSTLALVEK (129 aa)). An SIN1-type RBD region spans residues 279-353 (LFVRINAAHG…QNSLEFCLVR (75 aa)). Positions 310 to 333 (KRRKGSQRNSGPQYRLEKQSQPNV) are disordered. In terms of domain architecture, SIN1-type PH spans 382–487 (QYKSFKVSMI…IVLKVNYILE (106 aa)). Arginine 393, lysine 428, and lysine 464 together coordinate a 1,2-diacyl-sn-glycero-3-phospho-(1D-myo-inositol-3,4,5-trisphosphate).

The protein belongs to the SIN1 family. In terms of assembly, component of the mechanistic target of rapamycin complex 2 (mTORC2), consisting in two heterotretramers composed of MTOR, MLST8, RICTOR and MAPKAP1/SIN1. Contrary to mTORC1, mTORC2 does not bind to and is not sensitive to FKBP12-rapamycin.

The protein localises to the cell membrane. Its subcellular location is the endoplasmic reticulum membrane. It is found in the early endosome membrane. The protein resides in the late endosome membrane. It localises to the lysosome membrane. The protein localises to the golgi apparatus membrane. Its subcellular location is the mitochondrion outer membrane. It is found in the cytoplasm. The protein resides in the perinuclear region. It localises to the nucleus. With respect to regulation, phosphatidylinositol 3,4,5-trisphosphate (PI(3,4,5)P3) promotes MTOR activation by relieving MAPKAP1/SIN1-mediated inhibition of MTOR that takes place in absence of PI(3,4,5)P3. In terms of biological role, component of the mechanistic target of rapamycin complex 2 (mTORC2), which transduces signals from growth factors to pathways involved in proliferation, cytoskeletal organization, lipogenesis and anabolic output. In response to growth factors, mTORC2 phosphorylates and activates AGC protein kinase family members, including AKT (AKT1, AKT2 and AKT3), PKC (PRKCA, PRKCB and PRKCE) and SGK1. In contrast to mTORC1, mTORC2 is nutrient-insensitive. Within the mTORC2 complex, MAPKAP1/SIN1 acts as a substrate adapter which recognizes and binds AGC protein kinase family members for phosphorylation by MTOR. This is Target of rapamycin complex 2 subunit MAPKAP1 (mapkap1) from Xenopus tropicalis (Western clawed frog).